Here is a 334-residue protein sequence, read N- to C-terminus: Anthranilate phosphoribosyltransferase (334 aa).

5-phospho-alpha-D-ribose 1-diphosphate-binding positions include Gly79, Gly82–Asp83, Ser87, Asn89–Thr92, Lys107–Ser115, and Ser119. Gly79 contacts anthranilate. Ser91 lines the Mg(2+) pocket. Asn110 lines the anthranilate pocket. Residue Arg165 coordinates anthranilate. Mg(2+)-binding residues include Asp224 and Glu225.

Belongs to the anthranilate phosphoribosyltransferase family. Homodimer. Mg(2+) serves as cofactor.

The enzyme catalyses N-(5-phospho-beta-D-ribosyl)anthranilate + diphosphate = 5-phospho-alpha-D-ribose 1-diphosphate + anthranilate. It participates in amino-acid biosynthesis; L-tryptophan biosynthesis; L-tryptophan from chorismate: step 2/5. Its function is as follows. Catalyzes the transfer of the phosphoribosyl group of 5-phosphorylribose-1-pyrophosphate (PRPP) to anthranilate to yield N-(5'-phosphoribosyl)-anthranilate (PRA). This is Anthranilate phosphoribosyltransferase from Streptococcus gordonii (strain Challis / ATCC 35105 / BCRC 15272 / CH1 / DL1 / V288).